The primary structure comprises 602 residues: NAD-dependent protein deacetylase sir-2.1 (602 aa).

The segment at 25–57 (PEIETMHIENSVEGESGRQRTESTASVNSESWQ) is disordered. Polar residues predominate over residues 46 to 57 (ESTASVNSESWQ). Residues 119-374 (KLFTYNSLSD…RDICYALGGS (256 aa)) form the Deacetylase sirtuin-type domain. NAD(+)-binding positions include 144 to 163 (GAGV…DGIY) and 228 to 231 (QNID). The active-site Proton acceptor is the histidine 246. Zn(2+)-binding residues include cysteine 254, cysteine 257, cysteine 278, and cysteine 281. Residues 318–320 (GSS), 343–345 (NRE), and cysteine 360 contribute to the NAD(+) site. Disordered stretches follow at residues 411-468 (QERR…SDEV) and 520-551 (RNRH…RSQS).

It belongs to the sirtuin family. Class I subfamily. In terms of assembly, interacts with ftt-2 and par-5. Interacts with daf-16 following heat-shock, which causes daf-16 to accumulate in the nucleus. Interaction with daf-16 is promoted by ftt-2. Requires Zn(2+) as cofactor.

It is found in the nucleus. It catalyses the reaction N(6)-acetyl-L-lysyl-[protein] + NAD(+) + H2O = 2''-O-acetyl-ADP-D-ribose + nicotinamide + L-lysyl-[protein]. NAD-dependent deacetylase. Required for a reduction of the 'Lys-16' acetylation of histone H4 (H4K16ac) on dosage-compensated X chromosomes in hermaphrodites. Functions upstream of daf-16 in the insulin-like signaling pathway, promoting daf-16 mediated transcriptional activation and increased life-span. May also regulate life-span independently of daf-16 by modulating the transcription of genes involved in the stress response of the endoplasmic reticulum (ER). Acts upstream of the nicotinic acid metabolism pathway, which may be linked to the regulation of longevity. Plays a role in ascaroside-mediated longevity and stress resistance. The sequence is that of NAD-dependent protein deacetylase sir-2.1 (sir-2.1) from Caenorhabditis briggsae.